The following is a 265-amino-acid chain: Putative carbamate hydrolase RutD (265 aa).

The AB hydrolase-1 domain maps to 21 to 123 (PILLSAGMGG…TIVNGWARAD (103 aa)).

This sequence belongs to the AB hydrolase superfamily. Hydrolase RutD family.

The enzyme catalyses carbamate + 2 H(+) = NH4(+) + CO2. In terms of biological role, involved in pyrimidine catabolism. May facilitate the hydrolysis of carbamate, a reaction that can also occur spontaneously. This Azorhizobium caulinodans (strain ATCC 43989 / DSM 5975 / JCM 20966 / LMG 6465 / NBRC 14845 / NCIMB 13405 / ORS 571) protein is Putative carbamate hydrolase RutD.